Consider the following 795-residue polypeptide: Protein espinas (795 aa).

Positions 30–96 are disordered; the sequence is GTGLTFPPHR…FVSPLQRRHC (67 aa). Residues 52–66 show a composition bias toward low complexity; sequence ASMSSNVASTATSSN. Residues 135 to 243 form the PET domain; the sequence is LDFQRNSQSD…AVRLLSDERP (109 aa). LIM zinc-binding domains lie at 242–306, 307–367, and 368–430; these read RPCK…ETQK, PRCS…MFAE, and YCDY…GEPP. Disordered regions lie at residues 427–487 and 616–684; these read GEPP…GSAG and NRNT…EMQI. Basic and acidic residues-rich tracts occupy residues 459–471 and 637–649; these read RSGDRDRERESSR and LDNRPLKEVRFHS. Positions 650–662 are enriched in polar residues; it reads VQDTMSRSKSYTD. A compositionally biased stretch (basic residues) spans 666 to 675; the sequence is ARRRRRRRNQ.

The protein belongs to the prickle / espinas / testin family.

The protein is Protein espinas of Drosophila pseudoobscura pseudoobscura (Fruit fly).